The following is a 1289-amino-acid chain: Pesticidal crystal protein Cry5Ab (1289 aa).

A disordered region spans residues 1263-1289; sequence PLPTDDQNSEGNTASSTNSDTSMNNNQ. Low complexity predominate over residues 1274 to 1289; it reads NTASSTNSDTSMNNNQ.

It belongs to the delta endotoxin family.

In terms of biological role, endotoxin with nematicidal activity. The protein is Pesticidal crystal protein Cry5Ab (cry5Ab) of Bacillus thuringiensis subsp. darmstadiensis.